The sequence spans 1144 residues: Guanine nucleotide-binding protein G(s) subunit alpha isoforms XLas (1144 aa).

Disordered stretches follow at residues Met1–Gly186, Asp316–Gly558, Ser622–Pro657, and Arg735–Arg772. Over residues Leu31–Ala46 the composition is skewed to low complexity. The span at Lys343–Ala356 shows a compositional bias: basic and acidic residues. Residues Glu358–Ala369 show a composition bias toward polar residues. Basic and acidic residues predominate over residues Glu370 to Glu381. Low complexity-rich tracts occupy residues Pro467–Ala499 and Glu518–Gly558. Positions Pro644–Ser654 are enriched in pro residues. A compositionally biased stretch (basic and acidic residues) spans Lys743 to Arg767. Residues Lys745 to Arg772 are a coiled coil. A G-alpha domain is found at Cys789 to Leu1144. Residues Arg792–Thr805 are G1 motif. Position 797-805 (Gly797–Thr805) interacts with GTP. Ser804 contacts Mg(2+). The tract at residues Phe818–Thr840 is disordered. Residues Glu837–Leu863 adopt a coiled-coil conformation. The tract at residues Asp946 to Thr954 is G2 motif. Residues Leu947 to Thr954, Asp973 to Gln977, and Asn1042 to Asp1045 contribute to the GTP site. Residue Arg951 is modified to ADP-ribosylarginine; by cholera toxin. Thr954 is a binding site for Mg(2+). The interval Phe969–Arg978 is G3 motif. The segment at Ile1038 to Asp1045 is G4 motif. The residue at position 1102 (Ser1102) is a Phosphoserine. The tract at residues Thr1114–Thr1119 is G5 motif. A GTP-binding site is contributed by Ala1116.

The protein belongs to the G-alpha family. G(s) subfamily. G proteins are composed of 3 units; alpha, beta and gamma. The alpha chain contains the guanine nucleotide binding site. Interacts through its N-terminal region with ALEX which is produced from the same locus in a different open reading frame. This interaction may inhibit its adenylyl cyclase-stimulating activity. Interacts with MAGED2. As to expression, enriched in neuroendocrine tissues with a particularly high level of expression in pituitary where it is abundant in intermediate and anterior lobes. In adrenal gland, found in central region containing medullary chromaffin cells but not in cortex. In cerebellum, strongly expressed in perikarya of Purkinje cells. Not detected in liver, kidney or neurohypophysis.

The protein resides in the cell membrane. It localises to the apical cell membrane. In terms of biological role, guanine nucleotide-binding proteins (G proteins) function as transducers in numerous signaling pathways controlled by G protein-coupled receptors (GPCRs). Signaling involves the activation of adenylyl cyclases, resulting in increased levels of the signaling molecule cAMP. GNAS functions downstream of several GPCRs, including beta-adrenergic receptors. XLas isoforms interact with the same set of receptors as Gnas isoforms. This is Guanine nucleotide-binding protein G(s) subunit alpha isoforms XLas from Rattus norvegicus (Rat).